Consider the following 300-residue polypeptide: Probable protein phosphatase 2C 3 (300 aa).

The PPM-type phosphatase domain maps to 23-298 (IFAASEMQGW…DNMTTILVYL (276 aa)). Mn(2+) is bound by residues aspartate 57, glycine 58, aspartate 237, and aspartate 289.

The protein belongs to the PP2C family. Mg(2+) serves as cofactor. The cofactor is Mn(2+).

The protein localises to the membrane. The catalysed reaction is O-phospho-L-seryl-[protein] + H2O = L-seryl-[protein] + phosphate. The enzyme catalyses O-phospho-L-threonyl-[protein] + H2O = L-threonyl-[protein] + phosphate. Functionally, enzyme with a broad specificity. This is Probable protein phosphatase 2C 3 from Paramecium tetraurelia.